The sequence spans 55 residues: Large ribosomal subunit protein bL33 (55 aa).

Belongs to the bacterial ribosomal protein bL33 family.

The sequence is that of Large ribosomal subunit protein bL33 from Baumannia cicadellinicola subsp. Homalodisca coagulata.